A 43-amino-acid chain; its full sequence is Omega-agatoxin-Aa3c (43 aa).

Intrachain disulfides connect cysteine 2–cysteine 19, cysteine 9–cysteine 25, and cysteine 27–cysteine 38.

It belongs to the neurotoxin 04 (omega-agtx) family. 03 (type II/III omega-agtx) subfamily. As to expression, expressed by the venom gland.

It localises to the secreted. Its function is as follows. Omega-agatoxins are antagonists of voltage-gated calcium channels (Cav). In Agelenopsis aperta (North American funnel-web spider), this protein is Omega-agatoxin-Aa3c.